The following is a 95-amino-acid chain: Large ribosomal subunit protein bL27 (95 aa).

A disordered region spans residues 1-25; the sequence is MAHKKGTGSTRNGRDSNAQRLGVKR. Residues 7–19 are compositionally biased toward polar residues; sequence TGSTRNGRDSNAQ.

The protein belongs to the bacterial ribosomal protein bL27 family.

This is Large ribosomal subunit protein bL27 from Gloeobacter violaceus (strain ATCC 29082 / PCC 7421).